The following is a 664-amino-acid chain: UvrABC system protein B (664 aa).

The region spanning 25–412 is the Helicase ATP-binding domain; it reads KGLVSGLTDQ…LQVVEQLVRP (388 aa). 38–45 provides a ligand contact to ATP; the sequence is GVTGSGKT. The Beta-hairpin motif lies at 91–114; the sequence is YYDYYQPEAYVPQKDMYIEKDSDI. The Helicase C-terminal domain maps to 428–594; it reads QIDDLLEEVK…GIRKAIKDIN (167 aa). The region spanning 620 to 655 is the UVR domain; it reads ARLIKELESQMKKAAKNLEFERAALIRDRVVELRAA.

This sequence belongs to the UvrB family. As to quaternary structure, forms a heterotetramer with UvrA during the search for lesions. Interacts with UvrC in an incision complex.

The protein resides in the cytoplasm. The UvrABC repair system catalyzes the recognition and processing of DNA lesions. A damage recognition complex composed of 2 UvrA and 2 UvrB subunits scans DNA for abnormalities. Upon binding of the UvrA(2)B(2) complex to a putative damaged site, the DNA wraps around one UvrB monomer. DNA wrap is dependent on ATP binding by UvrB and probably causes local melting of the DNA helix, facilitating insertion of UvrB beta-hairpin between the DNA strands. Then UvrB probes one DNA strand for the presence of a lesion. If a lesion is found the UvrA subunits dissociate and the UvrB-DNA preincision complex is formed. This complex is subsequently bound by UvrC and the second UvrB is released. If no lesion is found, the DNA wraps around the other UvrB subunit that will check the other stand for damage. This chain is UvrABC system protein B, found in Dehalococcoides mccartyi (strain CBDB1).